We begin with the raw amino-acid sequence, 542 residues long: Chaperonin GroEL 2 (542 aa).

ATP is bound by residues 29 to 32 (TLGP), 86 to 90 (DGTTT), G413, 477 to 479 (NAA), and D493.

Belongs to the chaperonin (HSP60) family. As to quaternary structure, forms a cylinder of 14 subunits composed of two heptameric rings stacked back-to-back. Interacts with the co-chaperonin GroES.

It localises to the cytoplasm. The catalysed reaction is ATP + H2O + a folded polypeptide = ADP + phosphate + an unfolded polypeptide.. In terms of biological role, together with its co-chaperonin GroES, plays an essential role in assisting protein folding. The GroEL-GroES system forms a nano-cage that allows encapsulation of the non-native substrate proteins and provides a physical environment optimized to promote and accelerate protein folding. This Frankia alni (strain DSM 45986 / CECT 9034 / ACN14a) protein is Chaperonin GroEL 2.